A 429-amino-acid chain; its full sequence is 3-phosphoshikimate 1-carboxyvinyltransferase (429 aa).

Residues Lys-11, Ser-12, and Arg-16 each coordinate 3-phosphoshikimate. Lys-11 serves as a coordination point for phosphoenolpyruvate. Gly-82 and Arg-110 together coordinate phosphoenolpyruvate. Positions 155, 157, 302, and 329 each coordinate 3-phosphoshikimate. Gln-157 is a phosphoenolpyruvate binding site. The Proton acceptor role is filled by Asp-302. 2 residues coordinate phosphoenolpyruvate: Arg-333 and Arg-385.

It belongs to the EPSP synthase family. As to quaternary structure, monomer.

Its subcellular location is the cytoplasm. It catalyses the reaction 3-phosphoshikimate + phosphoenolpyruvate = 5-O-(1-carboxyvinyl)-3-phosphoshikimate + phosphate. The protein operates within metabolic intermediate biosynthesis; chorismate biosynthesis; chorismate from D-erythrose 4-phosphate and phosphoenolpyruvate: step 6/7. In terms of biological role, catalyzes the transfer of the enolpyruvyl moiety of phosphoenolpyruvate (PEP) to the 5-hydroxyl of shikimate-3-phosphate (S3P) to produce enolpyruvyl shikimate-3-phosphate and inorganic phosphate. The protein is 3-phosphoshikimate 1-carboxyvinyltransferase of Helicobacter pylori (strain P12).